Here is a 165-residue protein sequence, read N- to C-terminus: U11/U12 small nuclear ribonucleoprotein 25 kDa protein (165 aa).

A Ubiquitin-like domain is found at 52–137; it reads MRLSVVKLDG…IRNNSQVTFM (86 aa). Positions 145-165 are disordered; sequence RGRHSKRKKHRLFRSLHKTSS.

Component of the U11/U12 snRNPs that are part of the U12-type spliceosome.

The protein resides in the nucleus. This chain is U11/U12 small nuclear ribonucleoprotein 25 kDa protein (SNRNP25), found in Arabidopsis thaliana (Mouse-ear cress).